An 89-amino-acid chain; its full sequence is Small ribosomal subunit protein uS15 (89 aa).

It belongs to the universal ribosomal protein uS15 family. As to quaternary structure, part of the 30S ribosomal subunit. Forms a bridge to the 50S subunit in the 70S ribosome, contacting the 23S rRNA.

In terms of biological role, one of the primary rRNA binding proteins, it binds directly to 16S rRNA where it helps nucleate assembly of the platform of the 30S subunit by binding and bridging several RNA helices of the 16S rRNA. Its function is as follows. Forms an intersubunit bridge (bridge B4) with the 23S rRNA of the 50S subunit in the ribosome. The chain is Small ribosomal subunit protein uS15 from Dictyoglomus thermophilum (strain ATCC 35947 / DSM 3960 / H-6-12).